A 132-amino-acid chain; its full sequence is Small ribosomal subunit protein uS8c (132 aa).

This sequence belongs to the universal ribosomal protein uS8 family. Part of the 30S ribosomal subunit.

Its subcellular location is the plastid. The protein resides in the chloroplast. Functionally, one of the primary rRNA binding proteins, it binds directly to 16S rRNA central domain where it helps coordinate assembly of the platform of the 30S subunit. The polypeptide is Small ribosomal subunit protein uS8c (rps8) (Illicium oligandrum (Star anise)).